The primary structure comprises 299 residues: MAKSLLASSLSVRTKILQTGVSLYNTTHGFHEEEVKKILEQFPGGSIDLQKKQNGIGILTLNNSNKMNAFSGAMMLQLLERVIELENWTEGKGLIVHGAKNTFCSGSDLNAVKALSTPENGVALSMFMQNTLTRFMRLPLISVALVQGWAMGGGAELTTACDFRLMTEESVIRFVHKEMGIVPSWGGASRLVEIIGSRQALKVLSGTFKLDSKEALRIGLADEVLQPSDEATALEQAQEWLEQFVSGPAQVIRGLKKSVCSGRELYLEEALQNERDVLETLWGGPANLEAIAKKGKHTK.

At lysine 209 the chain carries N6-acetyllysine; alternate. Lysine 209 carries the N6-succinyllysine; alternate modification. An N6-succinyllysine modification is found at lysine 293.

It belongs to the enoyl-CoA hydratase/isomerase family.

It is found in the cytoplasm. Its subcellular location is the cytosol. The catalysed reaction is (2S)-ethylmalonyl-CoA + H(+) = butanoyl-CoA + CO2. The enzyme catalyses (S)-methylmalonyl-CoA + H(+) = propanoyl-CoA + CO2. It carries out the reaction (2R)-ethylmalonyl-CoA + H(+) = butanoyl-CoA + CO2. Its function is as follows. Decarboxylates ethylmalonyl-CoA, a potentially toxic metabolite, to form butyryl-CoA, suggesting it might be involved in metabolite proofreading. Acts preferentially on (S)-ethylmalonyl-CoA but also has some activity on the (R)-isomer. Also has methylmalonyl-CoA decarboxylase activity at lower level. The polypeptide is Ethylmalonyl-CoA decarboxylase (Echdc1) (Rattus norvegicus (Rat)).